A 368-amino-acid polypeptide reads, in one-letter code: tRNA/tmRNA (uracil-C(5))-methyltransferase (368 aa).

The S-adenosyl-L-methionine site is built by glutamine 192, tyrosine 220, asparagine 225, glutamate 241, and aspartate 301. Cysteine 326 (nucleophile) is an active-site residue. Glutamate 360 (proton acceptor) is an active-site residue.

This sequence belongs to the class I-like SAM-binding methyltransferase superfamily. RNA M5U methyltransferase family. TrmA subfamily.

It catalyses the reaction uridine(54) in tRNA + S-adenosyl-L-methionine = 5-methyluridine(54) in tRNA + S-adenosyl-L-homocysteine + H(+). It carries out the reaction uridine(341) in tmRNA + S-adenosyl-L-methionine = 5-methyluridine(341) in tmRNA + S-adenosyl-L-homocysteine + H(+). In terms of biological role, dual-specificity methyltransferase that catalyzes the formation of 5-methyluridine at position 54 (m5U54) in all tRNAs, and that of position 341 (m5U341) in tmRNA (transfer-mRNA). The polypeptide is tRNA/tmRNA (uracil-C(5))-methyltransferase (Actinobacillus pleuropneumoniae serotype 7 (strain AP76)).